Consider the following 1072-residue polypeptide: Isoleucine--tRNA ligase, cytoplasmic (1072 aa).

A 'HIGH' region motif is present at residues 47-57 (PFATGTPHYGH). Lys-486 is covalently cross-linked (Glycyl lysine isopeptide (Lys-Gly) (interchain with G-Cter in ubiquitin)). Positions 602–606 (KMSKS) match the 'KMSKS' region motif. Lys-605 is an ATP binding site. Ser-829 and Ser-1059 each carry phosphoserine.

The protein belongs to the class-I aminoacyl-tRNA synthetase family.

Its subcellular location is the cytoplasm. It carries out the reaction tRNA(Ile) + L-isoleucine + ATP = L-isoleucyl-tRNA(Ile) + AMP + diphosphate. The sequence is that of Isoleucine--tRNA ligase, cytoplasmic (ILS1) from Saccharomyces cerevisiae (strain ATCC 204508 / S288c) (Baker's yeast).